A 508-amino-acid chain; its full sequence is Histidine--tRNA ligase, cytoplasmic (508 aa).

The 57-residue stretch at 3 to 59 (SPALEELVLNSRHRLVRGLKQQKASADQIEEEVAKLLKLKAQLGHDESKQKFVLKTP) folds into the WHEP-TRS domain. Phosphoserine is present on serine 66. L-histidine-binding positions include 130 to 132 (DLT), arginine 157, aspartate 177, arginine 326, and 330 to 331 (YY).

The protein belongs to the class-II aminoacyl-tRNA synthetase family. As to quaternary structure, homodimer.

The protein localises to the cytoplasm. The catalysed reaction is tRNA(His) + L-histidine + ATP = L-histidyl-tRNA(His) + AMP + diphosphate + H(+). Catalyzes the ATP-dependent ligation of histidine to the 3'-end of its cognate tRNA, via the formation of an aminoacyl-adenylate intermediate (His-AMP). Plays a role in axon guidance. This is Histidine--tRNA ligase, cytoplasmic (HARS1) from Mesocricetus auratus (Golden hamster).